The primary structure comprises 408 residues: LL-diaminopimelate aminotransferase (408 aa).

The substrate site is built by tyrosine 15 and glycine 42. Pyridoxal 5'-phosphate contacts are provided by residues tyrosine 72, 108–109 (SK), tyrosine 132, asparagine 187, tyrosine 218, and 246–248 (SFS). Substrate contacts are provided by lysine 109, tyrosine 132, and asparagine 187. Residue lysine 249 is modified to N6-(pyridoxal phosphate)lysine. The pyridoxal 5'-phosphate site is built by arginine 257 and asparagine 291. Positions 291 and 387 each coordinate substrate.

This sequence belongs to the class-I pyridoxal-phosphate-dependent aminotransferase family. LL-diaminopimelate aminotransferase subfamily. As to quaternary structure, homodimer. Pyridoxal 5'-phosphate serves as cofactor.

It carries out the reaction (2S,6S)-2,6-diaminopimelate + 2-oxoglutarate = (S)-2,3,4,5-tetrahydrodipicolinate + L-glutamate + H2O + H(+). It functions in the pathway amino-acid biosynthesis; L-lysine biosynthesis via DAP pathway; LL-2,6-diaminopimelate from (S)-tetrahydrodipicolinate (aminotransferase route): step 1/1. In terms of biological role, involved in the synthesis of meso-diaminopimelate (m-DAP or DL-DAP), required for both lysine and peptidoglycan biosynthesis. Catalyzes the direct conversion of tetrahydrodipicolinate to LL-diaminopimelate. The polypeptide is LL-diaminopimelate aminotransferase (Prochlorococcus marinus (strain NATL2A)).